The sequence spans 174 residues: Crossover junction endodeoxyribonuclease RuvC (174 aa).

Residues D8, E69, and D141 contribute to the active site. Mg(2+) is bound by residues D8, E69, and D141.

This sequence belongs to the RuvC family. As to quaternary structure, homodimer which binds Holliday junction (HJ) DNA. The HJ becomes 2-fold symmetrical on binding to RuvC with unstacked arms; it has a different conformation from HJ DNA in complex with RuvA. In the full resolvosome a probable DNA-RuvA(4)-RuvB(12)-RuvC(2) complex forms which resolves the HJ. The cofactor is Mg(2+).

Its subcellular location is the cytoplasm. The enzyme catalyses Endonucleolytic cleavage at a junction such as a reciprocal single-stranded crossover between two homologous DNA duplexes (Holliday junction).. Its function is as follows. The RuvA-RuvB-RuvC complex processes Holliday junction (HJ) DNA during genetic recombination and DNA repair. Endonuclease that resolves HJ intermediates. Cleaves cruciform DNA by making single-stranded nicks across the HJ at symmetrical positions within the homologous arms, yielding a 5'-phosphate and a 3'-hydroxyl group; requires a central core of homology in the junction. The consensus cleavage sequence is 5'-(A/T)TT(C/G)-3'. Cleavage occurs on the 3'-side of the TT dinucleotide at the point of strand exchange. HJ branch migration catalyzed by RuvA-RuvB allows RuvC to scan DNA until it finds its consensus sequence, where it cleaves and resolves the cruciform DNA. The chain is Crossover junction endodeoxyribonuclease RuvC from Xanthomonas euvesicatoria pv. vesicatoria (strain 85-10) (Xanthomonas campestris pv. vesicatoria).